The chain runs to 117 residues: uncharacterized protein (117 aa).

This is an uncharacterized protein from Escherichia coli (strain K12).